We begin with the raw amino-acid sequence, 419 residues long: Fusaric acid cluster transcription factor FUB10 (419 aa).

The segment at residues 16-47 (CDRCRAQKLRCHRDSGHSTDACLRCLKSGIEC) is a DNA-binding region (zn(2)-C6 fungal-type). Residues 50–92 (SKARPTGRPPSRQVQPTVVVEQGDTSSSSHTTDSSPSAGGTDM) are disordered. Residues 74–86 (TSSSSHTTDSSPS) show a composition bias toward low complexity.

Its subcellular location is the nucleus. Its function is as follows. Transcription factor that regulates the expression of the gene cluster that mediates the biosynthesis of fusaric acid, a mycotoxin with low to moderate toxicity to animals and humans, but with high phytotoxic properties. This is Fusaric acid cluster transcription factor FUB10 from Gibberella fujikuroi (strain CBS 195.34 / IMI 58289 / NRRL A-6831) (Bakanae and foot rot disease fungus).